A 378-amino-acid polypeptide reads, in one-letter code: Ribosomal RNA large subunit methyltransferase G (378 aa).

The protein belongs to the methyltransferase superfamily. RlmG family.

The protein localises to the cytoplasm. The catalysed reaction is guanosine(1835) in 23S rRNA + S-adenosyl-L-methionine = N(2)-methylguanosine(1835) in 23S rRNA + S-adenosyl-L-homocysteine + H(+). Specifically methylates the guanine in position 1835 (m2G1835) of 23S rRNA. The polypeptide is Ribosomal RNA large subunit methyltransferase G (Shewanella baltica (strain OS155 / ATCC BAA-1091)).